Consider the following 619-residue polypeptide: 1-deoxy-D-xylulose-5-phosphate synthase (619 aa).

Thiamine diphosphate contacts are provided by residues H80 and 121 to 123 (GHS). D152 contributes to the Mg(2+) binding site. Thiamine diphosphate-binding positions include 153-154 (GA), N181, Y288, and E370. N181 is a binding site for Mg(2+).

Belongs to the transketolase family. DXPS subfamily. Homodimer. The cofactor is Mg(2+). Thiamine diphosphate serves as cofactor.

It carries out the reaction D-glyceraldehyde 3-phosphate + pyruvate + H(+) = 1-deoxy-D-xylulose 5-phosphate + CO2. Its pathway is metabolic intermediate biosynthesis; 1-deoxy-D-xylulose 5-phosphate biosynthesis; 1-deoxy-D-xylulose 5-phosphate from D-glyceraldehyde 3-phosphate and pyruvate: step 1/1. Its function is as follows. Catalyzes the acyloin condensation reaction between C atoms 2 and 3 of pyruvate and glyceraldehyde 3-phosphate to yield 1-deoxy-D-xylulose-5-phosphate (DXP). The protein is 1-deoxy-D-xylulose-5-phosphate synthase of Yersinia pseudotuberculosis serotype O:3 (strain YPIII).